The primary structure comprises 335 residues: MVKYVLASAPAKVILFGEHSVVYGKPAIASAIELRTYVRAQFNDSGNIKIEAHDIKTPGLIVSFSEDKIYFETDYGKAAEVLSYVRYAIELALEESDKRVGIDVSITSQIPVGAGLGSSAAVAVATIGAVSRLLGLELSKEEIAKLGHKVELLVQGASSGIDPTVSAVGGFLYYKQGKFEPLPFMELPIVVGYTGSTGSTKELVAMVRKRYEEMPELVEPILEAMGKLVDKAKEIILSKLDEEEKLTKLGELMNINHGLLDALGVSTKKLGELVYAARTAGAIGAKLTGAGGGGCMYALAPGRQREVATAIKIAGGIPMITRVSREGLRIEEVSR.

An ATP-binding site is contributed by 111 to 121 (PVGAGLGSSAA). D162 serves as the catalytic Proton acceptor.

This sequence belongs to the GHMP kinase family. Mevalonate kinase subfamily. Homodimer. Requires Mg(2+) as cofactor.

Its subcellular location is the cytoplasm. The enzyme catalyses (R)-mevalonate + ATP = (R)-5-phosphomevalonate + ADP + H(+). The protein operates within isoprenoid biosynthesis; isopentenyl diphosphate biosynthesis via mevalonate pathway; isopentenyl diphosphate from (R)-mevalonate: step 1/3. Functionally, catalyzes the phosphorylation of (R)-mevalonate (MVA) to (R)-mevalonate 5-phosphate (MVAP). Functions in the mevalonate (MVA) pathway leading to isopentenyl diphosphate (IPP), a key precursor for the biosynthesis of isoprenoid compounds such as archaeal membrane lipids. In Pyrococcus horikoshii (strain ATCC 700860 / DSM 12428 / JCM 9974 / NBRC 100139 / OT-3), this protein is Mevalonate kinase.